Reading from the N-terminus, the 606-residue chain is Phosphoenolpyruvate carboxykinase [GTP] (606 aa).

Substrate is bound by residues Arg-79 and 218 to 220 (YGG). Mn(2+) contacts are provided by Lys-227 and His-247. Position 269 (Ser-269) interacts with substrate. 270–275 (ACGKTN) serves as a coordination point for GTP. Cys-271 is an active-site residue. Asp-294 is a binding site for Mn(2+). A substrate-binding site is contributed by 384 to 386 (NSR). Residues Arg-386, Arg-417, and 512 to 515 (FGEN) contribute to the GTP site.

It belongs to the phosphoenolpyruvate carboxykinase [GTP] family. In terms of assembly, monomer. It depends on Mn(2+) as a cofactor.

The protein localises to the cytoplasm. The catalysed reaction is oxaloacetate + GTP = phosphoenolpyruvate + GDP + CO2. The protein operates within carbohydrate biosynthesis; gluconeogenesis. Its function is as follows. Catalyzes the conversion of oxaloacetate (OAA) to phosphoenolpyruvate (PEP), the rate-limiting step in the metabolic pathway that produces glucose from lactate and other precursors derived from the citric acid cycle. In Corynebacterium jeikeium (strain K411), this protein is Phosphoenolpyruvate carboxykinase [GTP].